We begin with the raw amino-acid sequence, 203 residues long: Peptide deformylase (203 aa).

Fe cation contacts are provided by Cys121 and His163. The active site involves Glu164. His167 is a Fe cation binding site.

Belongs to the polypeptide deformylase family. The cofactor is Fe(2+).

It catalyses the reaction N-terminal N-formyl-L-methionyl-[peptide] + H2O = N-terminal L-methionyl-[peptide] + formate. Its function is as follows. Removes the formyl group from the N-terminal Met of newly synthesized proteins. Requires at least a dipeptide for an efficient rate of reaction. N-terminal L-methionine is a prerequisite for activity but the enzyme has broad specificity at other positions. The sequence is that of Peptide deformylase from Prochlorococcus marinus (strain SARG / CCMP1375 / SS120).